The following is a 175-amino-acid chain: RNA pyrophosphohydrolase (175 aa).

Residues 7–150 (GYRLNVGIIL…KRQVYIQALK (144 aa)) enclose the Nudix hydrolase domain. Positions 39 to 60 (GGLAPGETAMQAMYRELHEEVG) match the Nudix box motif.

Belongs to the Nudix hydrolase family. RppH subfamily. A divalent metal cation serves as cofactor.

Accelerates the degradation of transcripts by removing pyrophosphate from the 5'-end of triphosphorylated RNA, leading to a more labile monophosphorylated state that can stimulate subsequent ribonuclease cleavage. This chain is RNA pyrophosphohydrolase, found in Legionella pneumophila (strain Paris).